A 1024-amino-acid polypeptide reads, in one-letter code: Beta-galactosidase (1024 aa).

2 residues coordinate substrate: Asn-103 and Asp-202. Residue Asp-202 coordinates Na(+). The Mg(2+) site is built by Glu-417, His-419, and Glu-462. Substrate-binding positions include Glu-462 and 538–541 (EYAH). The active-site Proton donor is Glu-462. Glu-538 functions as the Nucleophile in the catalytic mechanism. Asn-598 serves as a coordination point for Mg(2+). The Na(+) site is built by Phe-602 and Asn-605. The substrate site is built by Asn-605 and Trp-1000.

It belongs to the glycosyl hydrolase 2 family. Homotetramer. Mg(2+) is required as a cofactor. Requires Na(+) as cofactor.

It carries out the reaction Hydrolysis of terminal non-reducing beta-D-galactose residues in beta-D-galactosides.. This chain is Beta-galactosidase, found in Escherichia coli (strain ATCC 8739 / DSM 1576 / NBRC 3972 / NCIMB 8545 / WDCM 00012 / Crooks).